Reading from the N-terminus, the 315-residue chain is tRNA dimethylallyltransferase (315 aa).

An ATP-binding site is contributed by 11-18 (GPTASGKS). Residue 13–18 (TASGKS) participates in substrate binding. Interaction with substrate tRNA stretches follow at residues 36–39 (DSMQ) and 160–164 (QRLIR).

It belongs to the IPP transferase family. As to quaternary structure, monomer. Mg(2+) serves as cofactor.

It carries out the reaction adenosine(37) in tRNA + dimethylallyl diphosphate = N(6)-dimethylallyladenosine(37) in tRNA + diphosphate. Functionally, catalyzes the transfer of a dimethylallyl group onto the adenine at position 37 in tRNAs that read codons beginning with uridine, leading to the formation of N6-(dimethylallyl)adenosine (i(6)A). The sequence is that of tRNA dimethylallyltransferase from Rickettsia bellii (strain OSU 85-389).